Consider the following 273-residue polypeptide: MTKLIIHLVSDSSVQTAKSAAHSSLAQFTSLKPKLYHWPMIRNSELLKEVLSNIESKHGIVLYTIADQELRKTLTKFCYELKIPCISVIGKIIKEMSVFSGIEIEKEQNYNYKFDKTYFDTLNAIDYAIRHDDGQLLNELQFADIVLIGPSRTSKTPTSVFLAYNGLKTANIPYVYNCPFPDFIEKDIDQLVVGLVINPNRLIEIRETRLNLLQINENRNYTDFNIVQKECLEVKKICELRNWPVIDVSTKSIEETAALIMRIYYNKKNKYNK.

Position 149–156 (149–156 (GPSRTSKT)) interacts with ADP.

It belongs to the pyruvate, phosphate/water dikinase regulatory protein family. PDRP subfamily.

It catalyses the reaction N(tele)-phospho-L-histidyl/L-threonyl-[pyruvate, phosphate dikinase] + ADP = N(tele)-phospho-L-histidyl/O-phospho-L-threonyl-[pyruvate, phosphate dikinase] + AMP + H(+). It carries out the reaction N(tele)-phospho-L-histidyl/O-phospho-L-threonyl-[pyruvate, phosphate dikinase] + phosphate + H(+) = N(tele)-phospho-L-histidyl/L-threonyl-[pyruvate, phosphate dikinase] + diphosphate. Its function is as follows. Bifunctional serine/threonine kinase and phosphorylase involved in the regulation of the pyruvate, phosphate dikinase (PPDK) by catalyzing its phosphorylation/dephosphorylation. The sequence is that of Putative pyruvate, phosphate dikinase regulatory protein from Rickettsia bellii (strain OSU 85-389).